Here is a 328-residue protein sequence, read N- to C-terminus: Tetraacyldisaccharide 4'-kinase (328 aa).

55-62 (TAGGNGKT) contacts ATP.

This sequence belongs to the LpxK family.

It catalyses the reaction a lipid A disaccharide + ATP = a lipid IVA + ADP + H(+). The protein operates within glycolipid biosynthesis; lipid IV(A) biosynthesis; lipid IV(A) from (3R)-3-hydroxytetradecanoyl-[acyl-carrier-protein] and UDP-N-acetyl-alpha-D-glucosamine: step 6/6. Transfers the gamma-phosphate of ATP to the 4'-position of a tetraacyldisaccharide 1-phosphate intermediate (termed DS-1-P) to form tetraacyldisaccharide 1,4'-bis-phosphate (lipid IVA). This chain is Tetraacyldisaccharide 4'-kinase, found in Escherichia fergusonii (strain ATCC 35469 / DSM 13698 / CCUG 18766 / IAM 14443 / JCM 21226 / LMG 7866 / NBRC 102419 / NCTC 12128 / CDC 0568-73).